A 129-amino-acid chain; its full sequence is Iron-sulfur cluster assembly 1 homolog, mitochondrial (129 aa).

The transit peptide at 1 to 12 (MASSVVRATVRA) directs the protein to the mitochondrion. Fe cation-binding residues include Cys57, Cys121, and Cys123.

It belongs to the HesB/IscA family.

Its subcellular location is the mitochondrion. Functionally, involved in the maturation of mitochondrial 4Fe-4S proteins functioning late in the iron-sulfur cluster assembly pathway. Probably involved in the binding of an intermediate of Fe/S cluster assembly. The chain is Iron-sulfur cluster assembly 1 homolog, mitochondrial (ISCA1) from Gallus gallus (Chicken).